Reading from the N-terminus, the 183-residue chain is Acidic proline-rich protein HP43A (183 aa).

A signal peptide spans 1–14 (MLVVLLTAALLAEH). The tract at residues 22–183 (ISQLSEEEQQ…QGSEEQSTSL (162 aa)) is disordered. Over residues 52 to 65 (SDEEGDDDGEEDGN) the composition is skewed to acidic residues. 5 repeat units span residues 81 to 100 (RPPKPGNQQGPPQQEGQQQN), 101 to 120 (RPPKPGNQEGPPQQEGQQQN), 121 to 140 (RPPKPGNQEGPPQQEGQQQN), 141 to 160 (RPPKPGNQEGPPQQEGQQQN), and 161 to 180 (RPPKPGNQEGPPQQGSEEQS). Low complexity predominate over residues 86–183 (GNQQGPPQQE…QGSEEQSTSL (98 aa)).

It is found in the secreted. This chain is Acidic proline-rich protein HP43A (H29), found in Mesocricetus auratus (Golden hamster).